The sequence spans 398 residues: Energy-coupling factor transporter ATP-binding protein EcfA2 (398 aa).

The ABC transporter domain maps to 5–240; that stretch reads IELKDLEYAY…KELVRRARLK (236 aa). 38 to 45 is a binding site for ATP; it reads GSNGAGKS.

Belongs to the ABC transporter superfamily. Energy-coupling factor EcfA family. In terms of assembly, forms a stable energy-coupling factor (ECF) transporter complex composed of 2 membrane-embedded substrate-binding proteins (S component), 2 ATP-binding proteins (A component) and 2 transmembrane proteins (T component).

It is found in the cell membrane. Functionally, ATP-binding (A) component of a common energy-coupling factor (ECF) ABC-transporter complex. Unlike classic ABC transporters this ECF transporter provides the energy necessary to transport a number of different substrates. This Methanospirillum hungatei JF-1 (strain ATCC 27890 / DSM 864 / NBRC 100397 / JF-1) protein is Energy-coupling factor transporter ATP-binding protein EcfA2.